A 464-amino-acid chain; its full sequence is Argininosuccinate lyase (464 aa).

Belongs to the lyase 1 family. Argininosuccinate lyase subfamily.

The protein resides in the cytoplasm. It catalyses the reaction 2-(N(omega)-L-arginino)succinate = fumarate + L-arginine. The protein operates within amino-acid biosynthesis; L-arginine biosynthesis; L-arginine from L-ornithine and carbamoyl phosphate: step 3/3. This is Argininosuccinate lyase from Pseudomonas savastanoi pv. phaseolicola (strain 1448A / Race 6) (Pseudomonas syringae pv. phaseolicola (strain 1448A / Race 6)).